The following is a 368-amino-acid chain: Alanine racemase (368 aa).

Lys-40 (proton acceptor; specific for D-alanine) is an active-site residue. An N6-(pyridoxal phosphate)lysine modification is found at Lys-40. Arg-134 lines the substrate pocket. The active-site Proton acceptor; specific for L-alanine is the Tyr-263. A substrate-binding site is contributed by Met-310.

Belongs to the alanine racemase family. Pyridoxal 5'-phosphate is required as a cofactor.

The enzyme catalyses L-alanine = D-alanine. Its pathway is amino-acid biosynthesis; D-alanine biosynthesis; D-alanine from L-alanine: step 1/1. Catalyzes the interconversion of L-alanine and D-alanine. May also act on other amino acids. The polypeptide is Alanine racemase (alr) (Listeria monocytogenes serotype 4a (strain HCC23)).